We begin with the raw amino-acid sequence, 569 residues long: MAATRVRCCHSNAAFTRLPLTRHRNSPTLPISLNRVDFPTLKKLSLPIGDGSSIRKVSGSGSRNIVRAVLEEKKTEAITEVDEKGITCVMKFGGSSVASAERMKEVADLILTFPEESPVIVLSAMGKTTNNLLLAGEKAVSCGVSNASEIEELSIIKELHIRTVKELNIDPSVILTYLEELEQLLKGIAMMKELTLRTRDYLVSFGECLSTRIFAAYLNTIGVKARQYDAFEIGFITTDDFTNGDILEATYPAVAKRLYDDWMHDPAVPIVTGFLGKGWKTGAVTTLGRGGSDLTATTIGKALGLKEIQVWKDVDGVLTCDPTIYKRATPVPYLTFDEAAELAYFGAQVLHPQSMRPAREGEIPVRVKNSYNPKAPGTIITKTRDMTKSILTSIVLKRNVTMLDIASTRMLGQVGFLAKVFSIFEELGISVDVVATSEVSISLTLDPSKLWSRELIQQELDHVVEELEKIAVVNLLKGRAIISLIGNVQHSSLILERAFHVLYTKGVNVQMISQGASKVNISFIVNEAEAEGCVQALHKSFFESGDLSELLIQPRLGNGSPVRTLQVEN.

The N-terminal 90 residues, 1-90 (MAATRVRCCH…VDEKGITCVM (90 aa)), are a transit peptide targeting the chloroplast. The ATP site is built by lysine 91, glycine 94, and serine 123. Residue glutamate 207 coordinates substrate. 2 ACT domains span residues 405–483 (IAST…AIIS) and 484–560 (LIGN…GNGS). Residues glutamine 413 and glycine 415 each coordinate L-lysine. Serine 430 serves as a coordination point for S-adenosyl-L-methionine. Residues valine 431, aspartate 432, and serine 437 each contribute to the L-lysine site. Positions 452 and 453 each coordinate S-adenosyl-L-methionine.

Belongs to the aspartokinase family. As to quaternary structure, homodimer.

The protein resides in the plastid. The protein localises to the chloroplast. It catalyses the reaction L-aspartate + ATP = 4-phospho-L-aspartate + ADP. It participates in amino-acid biosynthesis; L-lysine biosynthesis via DAP pathway; (S)-tetrahydrodipicolinate from L-aspartate: step 1/4. It functions in the pathway amino-acid biosynthesis; L-methionine biosynthesis via de novo pathway; L-homoserine from L-aspartate: step 1/3. The protein operates within amino-acid biosynthesis; L-threonine biosynthesis; L-threonine from L-aspartate: step 1/5. Inhibited by S-adenosyl-L-methionine (SAM) and lysine in a synergistic manner. No inhibition by threonine, leucine or SAM alone, and no activation or inhibition by alanine, cysteine, isoleucine, serine, valine, methionine, glutamine, asparagine, glutamic acid or arginine. Its function is as follows. Involved in the first step of essential amino acids lysine, threonine, methionine and isoleucine synthesis via the aspartate-family pathway. This Arabidopsis thaliana (Mouse-ear cress) protein is Aspartokinase 1, chloroplastic (AK1).